Reading from the N-terminus, the 498-residue chain is MRINPTTSGSAVSTVEEKKLGRIAQIIGPVLDVVFPPGKMPNIYNALVVKGRDTASQQINVTCEVQQLLGNNRVRAVAMSATDGLTRGMEVIDTGAPLSVPVGGATLGRIFNVLGEPVDNLGPVDTRTTSPIHRSAPAFIQLDTKLSIFETGIKVVDLLAPYRRGRKIGLFGGAGVGKTVLIMELINNIAKAHGGVSVFGGVGERTREGNDLYMEMKESGVINEKNIAESKVALVYGQMNEPPGARMRVGLTALTMAEYFRDVNEQDVLLFIDNIFRFVQAGSEVSALLGRMPSAVGYQPTLSTEMGSLQERITSTKEGSITSIQAVYVPADDLTDPAPATTFAHLDATTVLSRGLAAKGIYPAVDPLDSTSTMLQPWIVGEEHYETAQRVKQTLQRYKELQDIIAILGLDELSEEDRLTVARARKIERFLSQPFFVAEVFTGSPGKYVGLAETIRGFQLILSGELDGLPEQAFYLVGNIDEVTAKAMNLEKESNLKK.

Position 172-179 (172-179) interacts with ATP; it reads GGAGVGKT.

This sequence belongs to the ATPase alpha/beta chains family. As to quaternary structure, F-type ATPases have 2 components, CF(1) - the catalytic core - and CF(0) - the membrane proton channel. CF(1) has five subunits: alpha(3), beta(3), gamma(1), delta(1), epsilon(1). CF(0) has four main subunits: a(1), b(1), b'(1) and c(9-12).

Its subcellular location is the plastid. The protein resides in the chloroplast thylakoid membrane. It carries out the reaction ATP + H2O + 4 H(+)(in) = ADP + phosphate + 5 H(+)(out). In terms of biological role, produces ATP from ADP in the presence of a proton gradient across the membrane. The catalytic sites are hosted primarily by the beta subunits. The sequence is that of ATP synthase subunit beta, chloroplastic from Phormium tenax (New Zealand flax).